A 271-amino-acid polypeptide reads, in one-letter code: Transcription factor PU.1 (271 aa).

The tract at residues 124–164 (LSPAHQQSSDEEEGERQSPPLEVSDGEADGLEPGPGLLHGE) is disordered. Phosphoserine is present on residues Ser-141 and Ser-147. Positions 154–164 (LEPGPGLLHGE) are enriched in low complexity. The ETS DNA-binding region spans 171 to 254 (IRLYQFLLDL…VKKKLTYQFS (84 aa)). Positions 218, 231, 234, and 244 each coordinate DNA.

Belongs to the ETS family. As to quaternary structure, binds DNA as a monomer. Can form homomers. Directly interacts with CEBPD/NF-IL6-beta; this interaction does not affect DNA-binding properties of each partner. Interacts with NONO/p54(nrb). Interacts with RUNX1/AML1. Interacts with GFI1; the interaction represses SPI1 transcriptional activity, hence blocks SPI1-induced macrophage differentiation of myeloid progenitor cells. Interacts with CEBPE. Interacts with IRF4/Pip and IRF8. Interacts with JUN. Interacts with RB1. Interacts with TBP.

It localises to the nucleus. Transcriptional activity at macrophage-specific genes is inhibited by interaction with GFI1, which results in the inhibition of SPI1-induced macrophage differentiation of myeloid progenitor cells, but not that of the granulocyte lineage. Functionally, pioneer transcription factor, which controls hematopoietic cell fate by decompacting stem cell heterochromatin and allowing other transcription factors to enter otherwise inaccessible genomic sites. Once in open chromatin, can directly control gene expression by binding genetic regulatory elements and can also more broadly influence transcription by recruiting transcription factors, such as interferon regulatory factors (IRFs), to otherwise inaccessible genomic regions. Transcriptionally activates genes important for myeloid and lymphoid lineages, such as CSF1R or FCER1A. Transcriptional activation from certain promoters, possibly containing low affinity binding sites, is achieved cooperatively with other transcription factors. FCER1A transactivation is achieved in cooperation with GATA1. May be particularly important for the pro- to pre-B cell transition. Binds (via the ETS domain) onto the purine-rich DNA core sequence 5'-GAGGAA-3', also known as the PU-box. In vitro can bind RNA and interfere with pre-mRNA splicing. The sequence is that of Transcription factor PU.1 (Spi1) from Rattus norvegicus (Rat).